The sequence spans 712 residues: uncharacterized protein (712 aa).

Disordered regions lie at residues 1-46, 107-264, and 370-389; these read MAKI…NNLN, NIKP…IPQA, and QPQH…QQNQ. Composition is skewed to low complexity over residues 10 to 46, 107 to 143, and 161 to 173; these read INNS…NNLN, NIKP…SNSS, and TFDN…NSSN. The segment covering 178 to 187 has biased composition (polar residues); it reads ISPTTSPQLE. Composition is skewed to low complexity over residues 188 to 198 and 241 to 264; these read QHQQYQQQQHQ and PLQQ…IPQA.

This is an uncharacterized protein from Dictyostelium discoideum (Social amoeba).